Reading from the N-terminus, the 57-residue chain is Large ribosomal subunit protein bL32c (57 aa).

The protein belongs to the bacterial ribosomal protein bL32 family.

The protein localises to the plastid. The protein resides in the chloroplast. In Drimys granadensis, this protein is Large ribosomal subunit protein bL32c.